A 515-amino-acid polypeptide reads, in one-letter code: 2,3-bisphosphoglycerate-independent phosphoglycerate mutase (515 aa).

Positions 14 and 64 each coordinate Mn(2+). Serine 64 (phosphoserine intermediate) is an active-site residue. Substrate contacts are provided by residues histidine 125, 155–156 (RD), arginine 187, arginine 193, 263–266 (RADR), and lysine 337. Mn(2+) contacts are provided by aspartate 404, histidine 408, aspartate 445, histidine 446, and histidine 464.

Belongs to the BPG-independent phosphoglycerate mutase family. In terms of assembly, monomer. Mn(2+) is required as a cofactor.

It catalyses the reaction (2R)-2-phosphoglycerate = (2R)-3-phosphoglycerate. Its pathway is carbohydrate degradation; glycolysis; pyruvate from D-glyceraldehyde 3-phosphate: step 3/5. Its function is as follows. Catalyzes the interconversion of 2-phosphoglycerate and 3-phosphoglycerate. The sequence is that of 2,3-bisphosphoglycerate-independent phosphoglycerate mutase from Pseudomonas aeruginosa (strain ATCC 15692 / DSM 22644 / CIP 104116 / JCM 14847 / LMG 12228 / 1C / PRS 101 / PAO1).